The sequence spans 393 residues: NAD(P)H-quinone oxidoreductase subunit H, chloroplastic (393 aa).

Belongs to the complex I 49 kDa subunit family. In terms of assembly, NDH is composed of at least 16 different subunits, 5 of which are encoded in the nucleus.

Its subcellular location is the plastid. The protein localises to the chloroplast thylakoid membrane. The enzyme catalyses a plastoquinone + NADH + (n+1) H(+)(in) = a plastoquinol + NAD(+) + n H(+)(out). It catalyses the reaction a plastoquinone + NADPH + (n+1) H(+)(in) = a plastoquinol + NADP(+) + n H(+)(out). NDH shuttles electrons from NAD(P)H:plastoquinone, via FMN and iron-sulfur (Fe-S) centers, to quinones in the photosynthetic chain and possibly in a chloroplast respiratory chain. The immediate electron acceptor for the enzyme in this species is believed to be plastoquinone. Couples the redox reaction to proton translocation, and thus conserves the redox energy in a proton gradient. The polypeptide is NAD(P)H-quinone oxidoreductase subunit H, chloroplastic (Gossypium barbadense (Sea Island cotton)).